We begin with the raw amino-acid sequence, 784 residues long: Toll-like receptor 2 (784 aa).

The first 20 residues, 1 to 20, serve as a signal peptide directing secretion; that stretch reads MPRALWTAWVWAVIILSMEG. Topologically, residues 21-587 are extracellular; it reads ASHQASSLSC…ARLSLSECHR (567 aa). Cys30 and Cys36 are disulfide-bonded. LRR repeat units lie at residues 54 to 77, 78 to 101, 102 to 125, 126 to 150, 151 to 175, 176 to 199, 200 to 223, 224 to 250, 251 to 278, 279 to 308, 309 to 337, 338 to 361, 362 to 388, 389 to 414, 415 to 437, 438 to 457, 458 to 478, 479 to 500, and 501 to 524; these read VKSLDLSNNEITYVSNRDLQRCVN, LKTLRLGANEIHTVEEDSFFHLRN, LEYLDLSYNRLSNLSSSWFRSLYA, LKFLNLLGNVYKTLGETSLFSHLPN, LRTLKVGNSNSFTEIHEKDFTGLIF, LEELEISAQNLQIYVPKSLKSIQN, ISHLILHLKQPVLLVDILVDIVSS, LDCLELRDTNLHTFHFSEASISEMNTS, VKKLIFRNVQFTDESFVEVVKLFNYVSG, ILEVEFDDCTHDGIGDFRALSLDRIRHLGN, VETLTIRKLHIPQFFLFHDLSSIYPLTGK, VKRVTIESSKVFLVPCLLSQHLKS, LEYLDLSENLMSEETLKNSACKDAWPF, LQTLVLRQNRLKSLEKTGELLLTLKN, LNNLDISKNNFLSMPETCQWPGK, MKQLNLSSTRIHSLTQCLPQ, TLEILDVSNNNLDSFSLILPQ, LKELYISRNKLKTLPDASFLPV, and LSVMRISGNIINTFSKEQLDSFPQ. N-linked (GlcNAc...) asparagine glycosylation occurs at Asn114. Asn199 carries N-linked (GlcNAc...) asparagine glycosylation. N-linked (GlcNAc...) asparagine glycosylation is present at Asn248. A disulfide bridge links Cys353 with Cys382. A disulfide bridge links Cys432 with Cys454. Residue Asn442 is glycosylated (N-linked (GlcNAc...) asparagine). One can recognise an LRRCT domain in the interval 525-579; the sequence is LKALEAGGNNFICSCDFLSFTQGQQALARVLVDWPDGYRCDAPSHVRGQRVQDAR. A helical transmembrane segment spans residues 588 to 608; it reads AAVVSAVCCALFLLLLLTGVL. Residues 609–784 are Cytoplasmic-facing; it reads CHRFHGLWYM…WLNLRAAIRS (176 aa). The 144-residue stretch at 639–782 folds into the TIR domain; sequence LCYDAFVSYS…AFWLNLRAAI (144 aa). Lys754 participates in a covalent cross-link: Glycyl lysine isopeptide (Lys-Gly) (interchain with G-Cter in ubiquitin). Residues 761-778 carry the ATG16L1-binding motif motif; sequence YLEWPTDETQQEAFWLNL.

Belongs to the Toll-like receptor family. As to quaternary structure, interacts with LY96, TLR1 and TLR6 (via extracellular domain). TLR2 seems to exist in heterodimers with either TLR1 or TLR6 before stimulation by the ligand. The heterodimers form bigger oligomers in response to their corresponding ligands as well as further heterotypic associations with other receptors such as CD14 and/or CD36. Binds MYD88 (via TIR domain). Interacts with TICAM1. Interacts with CNPY3. Interacts with ATG16L1. Interacts with PPP1R11. Interacts with TICAM2. Interacts with TIRAP. Ubiquitinated at Lys-754 by PPP1R11, leading to its degradation. Deubiquitinated by USP2. In terms of processing, glycosylation of Asn-442 is critical for secretion of the N-terminal ectodomain of TLR2.

The protein resides in the membrane. The protein localises to the cytoplasmic vesicle. It is found in the phagosome membrane. Its subcellular location is the membrane raft. Functionally, cooperates with LY96 to mediate the innate immune response to bacterial lipoproteins and other microbial cell wall components. Cooperates with TLR1 or TLR6 to mediate the innate immune response to bacterial lipoproteins or lipopeptides. Acts via MYD88 and TRAF6, leading to NF-kappa-B activation, cytokine secretion and the inflammatory response. May also promote apoptosis in response to lipoproteins. Forms activation clusters composed of several receptors depending on the ligand, these clusters trigger signaling from the cell surface and subsequently are targeted to the Golgi in a lipid-raft dependent pathway. Forms the cluster TLR2:TLR6:CD14:CD36 in response to diacylated lipopeptides and TLR2:TLR1:CD14 in response to triacylated lipopeptides. This Capra hircus (Goat) protein is Toll-like receptor 2 (TLR2).